Reading from the N-terminus, the 447-residue chain is UDP-N-acetylmuramoylalanine--D-glutamate ligase (447 aa).

ATP is bound at residue 112 to 118; that stretch reads GTNGKST.

This sequence belongs to the MurCDEF family.

The protein resides in the cytoplasm. It carries out the reaction UDP-N-acetyl-alpha-D-muramoyl-L-alanine + D-glutamate + ATP = UDP-N-acetyl-alpha-D-muramoyl-L-alanyl-D-glutamate + ADP + phosphate + H(+). Its pathway is cell wall biogenesis; peptidoglycan biosynthesis. Cell wall formation. Catalyzes the addition of glutamate to the nucleotide precursor UDP-N-acetylmuramoyl-L-alanine (UMA). This is UDP-N-acetylmuramoylalanine--D-glutamate ligase from Legionella pneumophila subsp. pneumophila (strain Philadelphia 1 / ATCC 33152 / DSM 7513).